The following is a 124-amino-acid chain: Small ribosomal subunit protein uS12cz/uS12cy (124 aa).

It belongs to the universal ribosomal protein uS12 family. In terms of assembly, part of the 30S ribosomal subunit.

Its subcellular location is the plastid. It localises to the chloroplast. Functionally, with S4 and S5 plays an important role in translational accuracy. Located at the interface of the 30S and 50S subunits. This chain is Small ribosomal subunit protein uS12cz/uS12cy (rps12-A), found in Agrostis stolonifera (Creeping bentgrass).